The chain runs to 856 residues: Lon protease homolog 2, peroxisomal (856 aa).

The 210-residue stretch at 13-222 (LPLLLTHEGV…VTIPLLLRQI (210 aa)) folds into the Lon N-terminal domain. 379–386 (GPPGVGKT) is an ATP binding site. Residues 586–608 (GQHREHKSEHLEAPEGEERKESV) show a composition bias toward basic and acidic residues. Residues 586 to 614 (GQHREHKSEHLEAPEGEERKESVPEGSKS) form a disordered region. Residues 655–841 (LNQPGVAIGL…DEVLNAAFDG (187 aa)) enclose the Lon proteolytic domain. Residues S747 and K790 contribute to the active site. Residues 854–856 (SKL) carry the Microbody targeting signal motif.

It belongs to the peptidase S16 family.

Its subcellular location is the peroxisome matrix. The enzyme catalyses Hydrolysis of proteins in presence of ATP.. Its function is as follows. ATP-dependent serine protease that mediates the selective degradation of misfolded and unassembled polypeptides in the peroxisomal matrix. Necessary for type 2 peroxisome targeting signal (PTS2)-containing protein processing and facilitates peroxisome matrix protein import. This Xenopus laevis (African clawed frog) protein is Lon protease homolog 2, peroxisomal (lonp2).